Here is a 259-residue protein sequence, read N- to C-terminus: Glycerol-3-phosphate acyltransferase (259 aa).

A run of 7 helical transmembrane segments spans residues 11–31, 62–82, 93–112, 124–144, 152–172, 188–208, and 211–231; these read IILASVVGYFLGSISWSIIIV, LVVAFLDALKVIFTSIIAILL, TSYFIPCIFALIGHCFPIYY, LGLLFVVNILYLIIFLIVWFI, VSVASIFSAFFVLIIMWIPYL, FSVAWKNYILFSLLNSFHYWF, and IWASGMLEGNIIVLIGGLILG.

It belongs to the PlsY family. Probably interacts with PlsX.

Its subcellular location is the cell membrane. It carries out the reaction an acyl phosphate + sn-glycerol 3-phosphate = a 1-acyl-sn-glycero-3-phosphate + phosphate. It participates in lipid metabolism; phospholipid metabolism. Catalyzes the transfer of an acyl group from acyl-phosphate (acyl-PO(4)) to glycerol-3-phosphate (G3P) to form lysophosphatidic acid (LPA). This enzyme utilizes acyl-phosphate as fatty acyl donor, but not acyl-CoA or acyl-ACP. The sequence is that of Glycerol-3-phosphate acyltransferase from Mycoplasma capricolum subsp. capricolum (strain California kid / ATCC 27343 / NCTC 10154).